The primary structure comprises 820 residues: Inhibitor of nuclear factor kappa-B kinase epsilon subunit homolog 1 (820 aa).

Residues 21 to 299 enclose the Protein kinase domain; sequence LFNDESIGKG…TDIFEFQPVT (279 aa). ATP-binding positions include 27 to 35 and Lys-49; that span reads IGKGAYSEV. Asp-149 (proton acceptor) is an active-site residue. The segment at 758 to 798 is disordered; that stretch reads SPNKEQFPKPEQDSILESSIDEGSTSFESTPPSSPPDVGSN.

Belongs to the protein kinase superfamily. Ser/Thr protein kinase family. Interacts with allo-1 (via N-terminus); the interaction is direct. In terms of tissue distribution, expressed in oocytes.

It is found in the cytoplasm. The catalysed reaction is L-seryl-[protein] + ATP = O-phospho-L-seryl-[protein] + ADP + H(+). The enzyme catalyses L-threonyl-[protein] + ATP = O-phospho-L-threonyl-[protein] + ADP + H(+). In terms of biological role, serine/threonine-protein kinase, which plays a role in regulating allophagy, an autophagic process in which paternal organelles, including mitochondria and membranous organelles, are degraded in embryos. Phosphorylates the allophagy receptor allo-1, which is required for allophagy. The chain is Inhibitor of nuclear factor kappa-B kinase epsilon subunit homolog 1 from Caenorhabditis elegans.